A 180-amino-acid chain; its full sequence is uncharacterized protein (180 aa).

The interval 1–93 is disordered; it reads MPSSVPKTSI…LPRRRNPGWV (93 aa). Low complexity-rich tracts occupy residues 9–25 and 47–64; these read SIES…SQAS and LTSS…SSSQ.

This is an uncharacterized protein from Homo sapiens (Human).